The primary structure comprises 238 residues: Purine nucleoside phosphorylase DeoD-type (238 aa).

A purine D-ribonucleoside is bound at residue His4. Residues Gly20, Arg24, Arg43, and 87-90 each bind phosphate; that span reads RVGS. Residues 179-181 and 203-204 each bind a purine D-ribonucleoside; these read EME and SD. The active-site Proton donor is Asp204.

This sequence belongs to the PNP/UDP phosphorylase family. Homohexamer; trimer of homodimers.

The enzyme catalyses a purine D-ribonucleoside + phosphate = a purine nucleobase + alpha-D-ribose 1-phosphate. It catalyses the reaction a purine 2'-deoxy-D-ribonucleoside + phosphate = a purine nucleobase + 2-deoxy-alpha-D-ribose 1-phosphate. Functionally, catalyzes the reversible phosphorolytic breakdown of the N-glycosidic bond in the beta-(deoxy)ribonucleoside molecules, with the formation of the corresponding free purine bases and pentose-1-phosphate. The protein is Purine nucleoside phosphorylase DeoD-type of Haemophilus influenzae (strain PittGG).